We begin with the raw amino-acid sequence, 441 residues long: Probable D-serine dehydratase (441 aa).

Lys-117 is modified (N6-(pyridoxal phosphate)lysine).

This sequence belongs to the serine/threonine dehydratase family. DsdA subfamily. Pyridoxal 5'-phosphate is required as a cofactor.

It catalyses the reaction D-serine = pyruvate + NH4(+). The chain is Probable D-serine dehydratase from Acinetobacter baylyi (strain ATCC 33305 / BD413 / ADP1).